The following is a 195-amino-acid chain: Cytochrome c oxidase assembly protein CtaG (195 aa).

Residues 1–7 (MSGGKPR) lie on the Cytoplasmic side of the membrane. A helical; Signal-anchor for type II membrane protein transmembrane segment spans residues 8–30 (SNTRTVAMLAGVVVLMGALSWAA). Topologically, residues 31-195 (VPFYSWFCKV…LDAKTEPTVN (165 aa)) are periplasmic.

It belongs to the COX11/CtaG family.

It is found in the cell inner membrane. Exerts its effect at some terminal stage of cytochrome c oxidase synthesis, probably by being involved in the insertion of the copper B into subunit I. The sequence is that of Cytochrome c oxidase assembly protein CtaG from Paracoccus denitrificans (strain Pd 1222).